A 512-amino-acid chain; its full sequence is Cytochrome P450 monooxygenase astD (512 aa).

A helical transmembrane segment spans residues M19–Y39. N191 and N413 each carry an N-linked (GlcNAc...) asparagine glycan. Position 449 (C449) interacts with heme.

The protein belongs to the cytochrome P450 family. Requires heme as cofactor.

It is found in the membrane. The protein operates within secondary metabolite biosynthesis; terpenoid biosynthesis. In terms of biological role, cytochrome P450 monooxygenase; part of the gene cluster that mediates the biosynthesis of astellolides, drimane-type sesquiterpene esters that show antimicrobial, anti-inflammatory, and anti-tumor activities. The first step in astellolide biosynthesis is performed by the sesquiterpene cyclase astC that catalyzes the formation of drimanyl pyrophosphate from farnesyl pyrophosphate. Drimanyl pyrophosphate is then dephosphorylated by the sesquiterpene phosphatase astI to produce drimanyl monophosphate which is further dephosphorylated to drim-8-ene-11-ol by atsK. Drim-8-ene-11-ol is converted to confertifolin, probably by the cytochrome P450 monooxygenase astD and/or the dehydrogenase astE. The cytochrome P450 monooxygenases astB, astF and astJ then hydroxylate confertifolin at C6, C14, or C15 to form trihydroxy confertifolin. The nonribosomal peptide synthetase astA catalyzes ester bond formation between trihydroxy contifolin and benzoic acid (BA) or 4-hydroxy benzoic acid (4HBA), leading to the formation of dideacetyl astellolides A and B, respectively. Finally, the O-acetyltransferase astG converts dideacetyl astellolides A and B into deacetyl astellolides A and B. This chain is Cytochrome P450 monooxygenase astD, found in Aspergillus oryzae (strain ATCC 42149 / RIB 40) (Yellow koji mold).